The following is a 671-amino-acid chain: BLOC-3 complex member HPS4 (671 aa).

A compositionally biased stretch (polar residues) spans 269-286; the sequence is LQGSSVQYPPWDQSSPTQ. Disordered stretches follow at residues 269–291 and 417–497; these read LQGS…EDAW and LADL…PSGR. The segment covering 467 to 477 has biased composition (low complexity); sequence SALPRSSRSPD.

In terms of assembly, component of the biogenesis of lysosome-related organelles complex-3 (or BLOC-3), a heterodimer of HPS1 and HPS4. HPS4 and the BLOC-3 complex interact with the GTP-bound form of RAB9B but not with the GDP-bound form of RAB9B. HPS4 and the BLOC-3 complex interact with the GTP-bound form of RAB9A but not with the GDP-bound form of RAB9A. HPS4 does not interact RAB4A and RAB7A. In terms of tissue distribution, highly expressed in heart, brain, liver and testis. Expressed at lower level in skeletal muscle.

Its function is as follows. Component of the BLOC-3 complex, a complex that acts as a guanine exchange factor (GEF) for RAB32 and RAB38, promotes the exchange of GDP to GTP, converting them from an inactive GDP-bound form into an active GTP-bound form. The BLOC-3 complex plays an important role in the control of melanin production and melanosome biogenesis and promotes the membrane localization of RAB32 and RAB38. The chain is BLOC-3 complex member HPS4 (Hps4) from Mus musculus (Mouse).